Consider the following 277-residue polypeptide: Phosphatidylglycerol--prolipoprotein diacylglyceryl transferase (277 aa).

4 consecutive transmembrane segments (helical) span residues 18-38 (ISVK…LLLA), 51-71 (IIVD…RIYY), 89-109 (IWHG…TAVI), and 116-136 (ISFW…QAIG). Arginine 137 is an a 1,2-diacyl-sn-glycero-3-phospho-(1'-sn-glycerol) binding site. 3 helical membrane passes run 177–197 (QPTF…LLII), 205–225 (GELF…IEGM), and 235–255 (FRVS…LIIY).

This sequence belongs to the Lgt family.

Its subcellular location is the cell membrane. The enzyme catalyses L-cysteinyl-[prolipoprotein] + a 1,2-diacyl-sn-glycero-3-phospho-(1'-sn-glycerol) = an S-1,2-diacyl-sn-glyceryl-L-cysteinyl-[prolipoprotein] + sn-glycerol 1-phosphate + H(+). Its pathway is protein modification; lipoprotein biosynthesis (diacylglyceryl transfer). Functionally, catalyzes the transfer of the diacylglyceryl group from phosphatidylglycerol to the sulfhydryl group of the N-terminal cysteine of a prolipoprotein, the first step in the formation of mature lipoproteins. This is Phosphatidylglycerol--prolipoprotein diacylglyceryl transferase from Listeria innocua serovar 6a (strain ATCC BAA-680 / CLIP 11262).